Reading from the N-terminus, the 156-residue chain is MLKLIWCQTLNGGISKNNKLPWYIKEELDHFYKTTKNHKIIMGKNTFDSLDQKPLNNRTNIIFSSIMQTPEDESYFVTNDFQQVLNDAKKEDIFIIGGKELFDIFLAYADVLIVSVLKDYYDCDLYMKVDYNNFNLDKQDVYDNFIVNYYSNKKEK.

Residues 1–156 (MLKLIWCQTL…VNYYSNKKEK (156 aa)) enclose the DHFR domain.

It belongs to the dihydrofolate reductase family.

It carries out the reaction (6S)-5,6,7,8-tetrahydrofolate + NADP(+) = 7,8-dihydrofolate + NADPH + H(+). It participates in cofactor biosynthesis; tetrahydrofolate biosynthesis; 5,6,7,8-tetrahydrofolate from 7,8-dihydrofolate: step 1/1. In terms of biological role, key enzyme in folate metabolism. Catalyzes an essential reaction for de novo glycine and purine synthesis, and for DNA precursor synthesis. The protein is Dihydrofolate reductase (folA) of Ureaplasma parvum serovar 3 (strain ATCC 700970).